A 151-amino-acid chain; its full sequence is Deoxyuridine 5'-triphosphate nucleotidohydrolase (151 aa).

Residues 69-71, N82, and 86-88 each bind substrate; these read RSG and TID.

It belongs to the dUTPase family. It depends on Mg(2+) as a cofactor.

It carries out the reaction dUTP + H2O = dUMP + diphosphate + H(+). It participates in pyrimidine metabolism; dUMP biosynthesis; dUMP from dCTP (dUTP route): step 2/2. In terms of biological role, this enzyme is involved in nucleotide metabolism: it produces dUMP, the immediate precursor of thymidine nucleotides and it decreases the intracellular concentration of dUTP so that uracil cannot be incorporated into DNA. The sequence is that of Deoxyuridine 5'-triphosphate nucleotidohydrolase from Rhodospirillum centenum (strain ATCC 51521 / SW).